The chain runs to 865 residues: V-type proton ATPase 116 kDa subunit a 3 (865 aa).

Residues 1 to 409 (MGSIYRSEHM…VNPAPWTIIS (409 aa)) are Cytoplasmic-facing. The stretch at 51–121 (FVNEVRRCDE…NKNCKVLKNN (71 aa)) forms a coiled coil. Residues 410 to 430 (FPFLFAVMFGDAGHGIIMLIA) traverse the membrane as a helical segment. The Extracellular portion of the chain corresponds to 431 to 453 (ASAFVIFEKKLISMKIKDEIFNT). A helical transmembrane segment spans residues 454-474 (FFGGRYVVLLMGMFAIYTGFI). Over 475 to 556 (YNDFYSKSVN…FLNPMKMKTS (82 aa)) the chain is Cytoplasmic. Residues 557-577 (ILLGISQMAFGIMLSLMNHIG) form a helical membrane-spanning segment. Asn578 carries N-linked (GlcNAc...) asparagine glycosylation. Over 578 to 583 (NRSVVD) the chain is Extracellular. The helical transmembrane segment at 584-604 (IVFVFIPQCLFLGCIFVYLCL) threads the bilayer. Residues 605–623 (QVLMKWIFFYVKPAYIFGR) are Cytoplasmic-facing. A helical membrane pass occupies residues 624 to 644 (LYPGSNCAPSLLIGLINMFMV). Residues 645-688 (KSRDASFAHDVGTAAGKEWVIVNGQNVTYTINDQCYLQQWYPNQ) lie on the Extracellular side of the membrane. N-linked (GlcNAc...) asparagine glycans are attached at residues Asn670 and Asn687. Residues 689–709 (SLVELILLLIAVVSVPVMLLV) traverse the membrane as a helical segment. Topologically, residues 710-798 (KPFYIRWRHS…LTMGGWGGSA (89 aa)) are cytoplasmic. The helical transmembrane segment at 799 to 819 (AITILFYFIFSILSVCILILM) threads the bilayer. Topologically, residues 820–865 (EGLSAFLHAIRLHWVEFQSKFYGGTGIQFEPFCFTKIIRVYEGLDQ) are extracellular.

It belongs to the V-ATPase 116 kDa subunit family. As to quaternary structure, V-ATPase is a heteromultimeric enzyme made up of two complexes: the ATP-hydrolytic V1 complex and the proton translocation V0 complex. The V1 complex consists of three catalytic AB heterodimers that form a heterohexamer, three peripheral stalks each consisting of EG heterodimers, one central rotor including subunits D and F, and the regulatory subunits C and H. The proton translocation complex V0 consists of the proton transport subunit a, a ring of proteolipid subunits c9c'', rotary subunit d, subunits e and f, and the accessory subunits vah-19/Ac45 and vah-20/PRR. Interacts with V-type proton ATPase subunit C vha-11.

Its subcellular location is the apical cell membrane. Functionally, subunit of the V0 complex of vacuolar(H+)-ATPase (V-ATPase), a multisubunit enzyme composed of a peripheral complex (V1) that hydrolyzes ATP and a membrane integral complex (V0) that translocates protons. V-ATPase is responsible for acidifying and maintaining the pH of intracellular compartments and in some cell types, is targeted to the plasma membrane, where it is responsible for acidifying the extracellular environment. In the intestine, required for the rhythmic defecation behavior by promoting acidification in the gut lumen following defecation. Also, luminal acidification is required for nutrient uptake. In Caenorhabditis elegans, this protein is V-type proton ATPase 116 kDa subunit a 3.